We begin with the raw amino-acid sequence, 231 residues long: Lipoprotein-releasing system ATP-binding protein LolD (231 aa).

Residues 6-231 form the ABC transporter domain; sequence LQVQAVSKSY…YLQAVAEHAQ (226 aa). 42–49 contributes to the ATP binding site; it reads GTSGSGKS.

Belongs to the ABC transporter superfamily. Lipoprotein translocase (TC 3.A.1.125) family. The complex is composed of two ATP-binding proteins (LolD) and two transmembrane proteins (LolC and LolE).

It localises to the cell inner membrane. Its function is as follows. Part of the ABC transporter complex LolCDE involved in the translocation of mature outer membrane-directed lipoproteins, from the inner membrane to the periplasmic chaperone, LolA. Responsible for the formation of the LolA-lipoprotein complex in an ATP-dependent manner. This is Lipoprotein-releasing system ATP-binding protein LolD from Shewanella sp. (strain MR-4).